Here is a 44-residue protein sequence, read N- to C-terminus: Defensin-like protein 1 (44 aa).

At Gln1 the chain carries Pyrrolidone carboxylic acid. A disulfide bridge links Cys15 with Cys36.

This sequence belongs to the DEFL family. Forms oligomers in its native state.

Its subcellular location is the secreted. Possesses antifungal activity sensitive to inorganic cations. This Brassica napus (Rape) protein is Defensin-like protein 1 (AFP1).